A 66-amino-acid polypeptide reads, in one-letter code: Ocellatin-PT1 (66 aa).

Residues 1–22 (MAFLKKSLFLVLFLGLVSLSIC) form the signal peptide. The propeptide occupies 23 to 39 (DEEKRQDEDDDDDDDEE). The residue at position 66 (valine 66) is a Valine amide.

In terms of tissue distribution, expressed by the skin glands.

The protein localises to the secreted. Functionally, has antibacterial activity against Gram-negative bacterium E.coli ATCC 25922 (MIC=300 uM) but not against S.pneumoniae ATCC 700603, S.choleraesuis ATCC 14028 or Gram-positive bacterium S.aureus ATCC 29313. Shows virtually no hemolytic activity and no cytotoxicity. The polypeptide is Ocellatin-PT1 (Leptodactylus pustulatus (Ceara white-lipped frog)).